A 122-amino-acid chain; its full sequence is MSNLSRKQQTQKRHRRLRRHLKGTAQRPRLAVFRSNNHIYAQVIDDEAQNTLCAASTLDKDLRTSLKADGSSCDASNAVGDLVAKRALAKGIQQVVFDRGGNLYHGRVKSLADAAREAGLQF.

The disordered stretch occupies residues 1 to 26 (MSNLSRKQQTQKRHRRLRRHLKGTAQ). Basic residues predominate over residues 9-22 (QTQKRHRRLRRHLK).

The protein belongs to the universal ribosomal protein uL18 family. In terms of assembly, part of the 50S ribosomal subunit; part of the 5S rRNA/L5/L18/L25 subcomplex. Contacts the 5S and 23S rRNAs.

Its function is as follows. This is one of the proteins that bind and probably mediate the attachment of the 5S RNA into the large ribosomal subunit, where it forms part of the central protuberance. The sequence is that of Large ribosomal subunit protein uL18 from Prochlorococcus marinus (strain MIT 9313).